Consider the following 151-residue polypeptide: NADPH-dependent 7-cyano-7-deazaguanine reductase (151 aa).

Catalysis depends on cysteine 51, which acts as the Thioimide intermediate. The active-site Proton donor is aspartate 58. Substrate contacts are provided by residues 73–75 (VES) and 92–93 (HE).

Belongs to the GTP cyclohydrolase I family. QueF type 1 subfamily.

It is found in the cytoplasm. It catalyses the reaction 7-aminomethyl-7-carbaguanine + 2 NADP(+) = 7-cyano-7-deazaguanine + 2 NADPH + 3 H(+). The protein operates within tRNA modification; tRNA-queuosine biosynthesis. Its function is as follows. Catalyzes the NADPH-dependent reduction of 7-cyano-7-deazaguanine (preQ0) to 7-aminomethyl-7-deazaguanine (preQ1). The polypeptide is NADPH-dependent 7-cyano-7-deazaguanine reductase (Bacteroides fragilis (strain YCH46)).